The sequence spans 93 residues: Small ribosomal subunit protein uS19 (93 aa).

The protein belongs to the universal ribosomal protein uS19 family.

Its function is as follows. Protein S19 forms a complex with S13 that binds strongly to the 16S ribosomal RNA. This Symbiobacterium thermophilum (strain DSM 24528 / JCM 14929 / IAM 14863 / T) protein is Small ribosomal subunit protein uS19.